The primary structure comprises 541 residues: Protein yellow (541 aa).

Positions 1–21 are cleaved as a signal peptide; that stretch reads MFQDKGWVLLTLITLVSPSWA. N144 carries an N-linked (GlcNAc...) asparagine glycan.

This sequence belongs to the major royal jelly protein family.

It localises to the secreted. Its function is as follows. Controls the pigmentation pattern of the adult cuticle and larval mouth parts. The sequence is that of Protein yellow (y) from Drosophila yakuba (Fruit fly).